We begin with the raw amino-acid sequence, 169 residues long: MSNVMRTPVVEKVIVHMGVGESGQHLVDAEEILRNITGQEVVRCFAKRTLPAFSIKKNEPIGCKVTLRGQRAQQFLETALGIVDKTLVRSQFDSLGNVSFGIEEHTDFPGMKYDPNIGVFGMDVTVVIKRPGERICKRRIATRKIPTNHRVTLEDSIAFLNDSYGVEVM.

The protein belongs to the universal ribosomal protein uL5 family. In terms of assembly, part of the 50S ribosomal subunit; contacts the 5S rRNA and probably tRNA. Forms a bridge to the 30S subunit in the 70S ribosome.

Functionally, this is one of the proteins that bind and probably mediate the attachment of the 5S RNA into the large ribosomal subunit, where it forms part of the central protuberance. In the 70S ribosome it contacts protein S13 of the 30S subunit (bridge B1b), connecting the 2 subunits; this bridge is implicated in subunit movement. May contact the P site tRNA; the 5S rRNA and some of its associated proteins might help stabilize positioning of ribosome-bound tRNAs. This chain is Large ribosomal subunit protein uL5, found in Methanosarcina barkeri (strain Fusaro / DSM 804).